The primary structure comprises 165 residues: Putative 1,2-phenylacetyl-CoA epoxidase, subunit D (165 aa).

In terms of assembly, monomer.

Its pathway is aromatic compound metabolism; phenylacetate degradation. Functionally, possible component of 1,2-phenylacetyl-CoA epoxidase multicomponent enzyme system which catalyzes the reduction of phenylacetyl-CoA (PA-CoA) to form 1,2-epoxyphenylacetyl-CoA. The subunit D may have a function related to the maturation of the monooxygenase complex, rather than direct involvement in catalysis. PaaD could assist either in maturation of PaaE or PaaA. This chain is Putative 1,2-phenylacetyl-CoA epoxidase, subunit D (paaD), found in Escherichia coli (strain K12).